The sequence spans 96 residues: Large ribosomal subunit protein uL23 (96 aa).

Belongs to the universal ribosomal protein uL23 family. In terms of assembly, part of the 50S ribosomal subunit. Contacts protein L29, and trigger factor when it is bound to the ribosome.

Functionally, one of the early assembly proteins it binds 23S rRNA. One of the proteins that surrounds the polypeptide exit tunnel on the outside of the ribosome. Forms the main docking site for trigger factor binding to the ribosome. In Enterococcus faecalis (strain ATCC 700802 / V583), this protein is Large ribosomal subunit protein uL23.